A 472-amino-acid polypeptide reads, in one-letter code: Trigger factor (472 aa).

The region spanning 174 to 261 is the PPIase FKBP-type domain; that stretch reads GDIALVSFKG…LEDLKIKELP (88 aa). The interval 438–472 is disordered; it reads EKTPEKARDQIKEKSSKKKTTKTNKEKKSSKTPKS. Residues 439–451 are compositionally biased toward basic and acidic residues; the sequence is KTPEKARDQIKEK.

This sequence belongs to the FKBP-type PPIase family. Tig subfamily.

The protein localises to the cytoplasm. The enzyme catalyses [protein]-peptidylproline (omega=180) = [protein]-peptidylproline (omega=0). Functionally, involved in protein export. Acts as a chaperone by maintaining the newly synthesized protein in an open conformation. Functions as a peptidyl-prolyl cis-trans isomerase. In Prochlorococcus marinus (strain NATL2A), this protein is Trigger factor.